The sequence spans 268 residues: Calpain small subunit 1 (268 aa).

An N-acetylmethionine modification is found at M1. S6 carries the phosphoserine modification. An EF-hand 1; atypical domain is found at 91–125 (EANESEEVRQFRRLFAQLAGDDMEVSATELMNILN). Residues A109, D112, E114, E119, D137, D152, D154, T156, K158, and E163 each contribute to the Ca(2+) site. EF-hand domains lie at 139–172 (FGIDTCRSMVAVMDSDTTGKLGFEEFKYLWNNIK), 169–204 (NNIKRWQAIYKQFDTDRSGTICSSELPGAFEAAGFH), 205–233 (LNEHLYNMIIRRYSDESGNMDFDNFISCL), and 234–268 (VRLDAMFRAFKSLDKDGTGQIQVNIQEWLQLTMYS). An N6-acetyllysine modification is found at K179. Ca(2+) contacts are provided by D182, D184, S186, T188, E193, and D225.

As to quaternary structure, homodimer or heterodimer of a large (catalytic) and a small (regulatory) subunit. In presence of calcium, the heterodimer dissociates.

It is found in the cytoplasm. It localises to the cell membrane. Its function is as follows. Regulatory subunit of the calcium-regulated non-lysosomal thiol-protease which catalyzes limited proteolysis of substrates involved in cytoskeletal remodeling and signal transduction. Essential for embryonic development. This Homo sapiens (Human) protein is Calpain small subunit 1 (CAPNS1).